The primary structure comprises 259 residues: Putative zinc metalloprotease Rip2 (259 aa).

2 helical membrane passes run 14-34 (PIFLLVIAVTAAGGALAWIAA) and 39-59 (PLSYVGVFILVIAGWLMSLCL). Residue histidine 60 participates in Zn(2+) binding. Glutamate 61 is an active-site residue. Position 64 (histidine 64) interacts with Zn(2+). The next 4 membrane-spanning stretches (helical) occupy residues 96–116 (LGLPVLIIALGGIGFPGGAVY), 129–149 (IVSLAGPAANLVLAVLLLGLT), 159–179 (VFWSGIAFLGFLQVTALVLNL), and 203–223 (LAPAKQWGFLIVVVLLITPAL).

This sequence belongs to the peptidase M50B family. Zn(2+) serves as cofactor.

It is found in the cell membrane. In Mycolicibacterium smegmatis (strain ATCC 700084 / mc(2)155) (Mycobacterium smegmatis), this protein is Putative zinc metalloprotease Rip2 (rip2).